The sequence spans 536 residues: Chaperonin GroEL (536 aa).

ATP is bound by residues 29–32, 86–90, Gly-412, and Asp-493; these read TLGP and DGTTT.

It belongs to the chaperonin (HSP60) family. In terms of assembly, forms a cylinder of 14 subunits composed of two heptameric rings stacked back-to-back. Interacts with the co-chaperonin GroES.

It localises to the cytoplasm. It catalyses the reaction ATP + H2O + a folded polypeptide = ADP + phosphate + an unfolded polypeptide.. Its function is as follows. Together with its co-chaperonin GroES, plays an essential role in assisting protein folding. The GroEL-GroES system forms a nano-cage that allows encapsulation of the non-native substrate proteins and provides a physical environment optimized to promote and accelerate protein folding. The protein is Chaperonin GroEL of Onion yellows phytoplasma (strain OY-M).